A 547-amino-acid polypeptide reads, in one-letter code: T-complex protein 1 subunit gamma (547 aa).

Position 41 (Gly41) interacts with ADP. Gly41 provides a ligand contact to ATP. Asp92 contacts Mg(2+). The ADP site is built by Gly93, Thr94, Thr95, Ser96, Thr161, and Lys162. Residues Gly93, Thr94, and Thr95 each coordinate ATP. Cys365 and Cys371 form a disulfide bridge. Gly410, Gly481, Glu482, Glu496, and Lys501 together coordinate ADP. 2 residues coordinate ATP: Gly410 and Gly481. Glu496 lines the ATP pocket. The segment covering 525–534 (HKKKGEDHGR) has biased composition (basic and acidic residues). Residues 525 to 547 (HKKKGEDHGRQPAAAPEAPQQAE) form a disordered region. Positions 535–547 (QPAAAPEAPQQAE) are enriched in low complexity.

This sequence belongs to the TCP-1 chaperonin family. In terms of assembly, component of the chaperonin-containing T-complex (TRiC), a hexadecamer composed of two identical back-to-back stacked rings enclosing a protein folding chamber. Each ring is made up of eight different subunits: TCP1/CCT1, CCT2, CCT3, CCT4, CCT5, CCT6A/CCT6, CCT7, CCT8.

The protein resides in the cytoplasm. The catalysed reaction is ATP + H2O = ADP + phosphate + H(+). In terms of biological role, component of the chaperonin-containing T-complex (TRiC), a molecular chaperone complex that assists the folding of actin, tubulin and other proteins upon ATP hydrolysis. In Xenopus laevis (African clawed frog), this protein is T-complex protein 1 subunit gamma (cct3).